A 192-amino-acid chain; its full sequence is Xanthine phosphoribosyltransferase (192 aa).

Residues Leu20 and Thr26 each coordinate xanthine. A 5-phospho-alpha-D-ribose 1-diphosphate-binding site is contributed by 127-131 (ANGQA). Lys155 contacts xanthine.

It belongs to the purine/pyrimidine phosphoribosyltransferase family. Xpt subfamily. In terms of assembly, homodimer.

The protein resides in the cytoplasm. It carries out the reaction XMP + diphosphate = xanthine + 5-phospho-alpha-D-ribose 1-diphosphate. The protein operates within purine metabolism; XMP biosynthesis via salvage pathway; XMP from xanthine: step 1/1. Functionally, converts the preformed base xanthine, a product of nucleic acid breakdown, to xanthosine 5'-monophosphate (XMP), so it can be reused for RNA or DNA synthesis. The protein is Xanthine phosphoribosyltransferase of Streptococcus thermophilus.